We begin with the raw amino-acid sequence, 332 residues long: HTH-type transcriptional regulator RegA (332 aa).

The HTH lacI-type domain occupies 1–57 (MATSIKDVAREAGVSIATVSRVLNDIDVVNEDTKKKVLDAIKELGYRPNIVARSLKT). Positions 5–24 (IKDVAREAGVSIATVSRVLN) form a DNA-binding region, H-T-H motif.

Involved in the regulation of amylase production. The chain is HTH-type transcriptional regulator RegA (regA) from Clostridium saccharobutylicum.